A 372-amino-acid polypeptide reads, in one-letter code: NAD(P)H-quinone oxidoreductase subunit 1 (372 aa).

8 consecutive transmembrane segments (helical) span residues 27–47 (AVWM…GVLI), 97–117 (ALFT…YLIV), 128–148 (LGIG…GLLM), 166–186 (AAQS…IAMM), 204–224 (ILGW…IAAL), 254–274 (FALF…MVAI), 308–328 (AVGI…AILL), and 351–371 (VGLV…IAFG).

This sequence belongs to the complex I subunit 1 family. As to quaternary structure, NDH-1 is composed of at least 11 different subunits.

It is found in the cellular thylakoid membrane. It carries out the reaction a plastoquinone + NADH + (n+1) H(+)(in) = a plastoquinol + NAD(+) + n H(+)(out). The catalysed reaction is a plastoquinone + NADPH + (n+1) H(+)(in) = a plastoquinol + NADP(+) + n H(+)(out). Its function is as follows. NDH-1 shuttles electrons from an unknown electron donor, via FMN and iron-sulfur (Fe-S) centers, to quinones in the respiratory and/or the photosynthetic chain. The immediate electron acceptor for the enzyme in this species is believed to be plastoquinone. Couples the redox reaction to proton translocation, and thus conserves the redox energy in a proton gradient. This Cyanothece sp. (strain PCC 7425 / ATCC 29141) protein is NAD(P)H-quinone oxidoreductase subunit 1.